A 276-amino-acid polypeptide reads, in one-letter code: Undecaprenyl-diphosphatase (276 aa).

A run of 7 helical transmembrane segments spans residues 12-34 (LGIV…IVVG), 43-63 (TATA…MWEF), 85-105 (FNLL…ADLI), 108-128 (WLFN…IMLW), 185-205 (TEFS…YSLF), 218-238 (IFAI…RALL), and 249-269 (FAWY…LHLI).

Belongs to the UppP family.

It is found in the cell inner membrane. The catalysed reaction is di-trans,octa-cis-undecaprenyl diphosphate + H2O = di-trans,octa-cis-undecaprenyl phosphate + phosphate + H(+). Catalyzes the dephosphorylation of undecaprenyl diphosphate (UPP). Confers resistance to bacitracin. This is Undecaprenyl-diphosphatase from Ectopseudomonas mendocina (strain ymp) (Pseudomonas mendocina).